Reading from the N-terminus, the 301-residue chain is Probable actin-related protein 2/3 complex subunit 2 (301 aa).

Belongs to the ARPC2 family. As to quaternary structure, component of the Arp2/3 complex, at least composed of arx-1, arx-2, arx-4 and arx-6.

It is found in the cytoplasm. It localises to the cytoskeleton. In terms of biological role, functions as actin-binding component of the Arp2/3 complex which is involved in regulation of actin polymerization and together with an activating nucleation-promoting factor (NPF) mediates the formation of branched actin networks. Seems to contact the mother actin filament. Plays a role in time-dependent memory loss and the retention of conditioned behavior over time. The sequence is that of Probable actin-related protein 2/3 complex subunit 2 from Caenorhabditis elegans.